We begin with the raw amino-acid sequence, 83 residues long: uncharacterized protein (83 aa).

The chain crosses the membrane as a helical span at residues 50–70; the sequence is IMVFLGEAWIILIPFAIFCII.

This sequence belongs to the plectrovirus ORF7 family.

It localises to the host membrane. This is an uncharacterized protein from Spiroplasma melliferum (SpV1).